The primary structure comprises 93 residues: Large ribosomal subunit protein bL27 (93 aa).

Residues 1–9 (MLQLNLQFF) constitute a propeptide that is removed on maturation. A disordered region spans residues 14–33 (GVGSTKNGRDSISKRLGAKR).

This sequence belongs to the bacterial ribosomal protein bL27 family. The N-terminus is cleaved by ribosomal processing cysteine protease Prp.

The chain is Large ribosomal subunit protein bL27 from Exiguobacterium sp. (strain ATCC BAA-1283 / AT1b).